Consider the following 314-residue polypeptide: DegV domain-containing protein XAC3508 (314 aa).

One can recognise a DegV domain in the interval 3–307 (IGIVVDSACD…KGALAVGFAA (305 aa)). Positions 63 and 96 each coordinate hexadecanoate.

In terms of biological role, may bind long-chain fatty acids, such as palmitate, and may play a role in lipid transport or fatty acid metabolism. The polypeptide is DegV domain-containing protein XAC3508 (Xanthomonas axonopodis pv. citri (strain 306)).